A 488-amino-acid chain; its full sequence is Proline--tRNA ligase (488 aa).

This sequence belongs to the class-II aminoacyl-tRNA synthetase family. ProS type 3 subfamily. Homodimer.

The protein localises to the cytoplasm. The catalysed reaction is tRNA(Pro) + L-proline + ATP = L-prolyl-tRNA(Pro) + AMP + diphosphate. Catalyzes the attachment of proline to tRNA(Pro) in a two-step reaction: proline is first activated by ATP to form Pro-AMP and then transferred to the acceptor end of tRNA(Pro). The sequence is that of Proline--tRNA ligase from Borreliella burgdorferi (strain ZS7) (Borrelia burgdorferi).